The primary structure comprises 202 residues: Holliday junction resolvase RecU (202 aa).

Mg(2+) contacts are provided by Thr85, Asp87, Glu100, and Gln119.

The protein belongs to the RecU family. It depends on Mg(2+) as a cofactor.

It is found in the cytoplasm. The enzyme catalyses Endonucleolytic cleavage at a junction such as a reciprocal single-stranded crossover between two homologous DNA duplexes (Holliday junction).. Its function is as follows. Endonuclease that resolves Holliday junction intermediates in genetic recombination. Cleaves mobile four-strand junctions by introducing symmetrical nicks in paired strands. Promotes annealing of linear ssDNA with homologous dsDNA. Required for DNA repair, homologous recombination and chromosome segregation. The polypeptide is Holliday junction resolvase RecU (Streptococcus equi subsp. equi (strain 4047)).